Consider the following 544-residue polypeptide: NXPE family member 4 (544 aa).

The N-terminal stretch at 1–27 (MKISMINYKSLLALLFILASWIIFTVF) is a signal peptide. N29, N38, N47, N48, N92, N160, and N210 each carry an N-linked (GlcNAc...) asparagine glycan.

This sequence belongs to the NXPE family.

The protein resides in the secreted. The chain is NXPE family member 4 (NXPE4) from Homo sapiens (Human).